The chain runs to 533 residues: Chromosomal replication initiator protein DnaA (533 aa).

Residues 1-72 (MNDFWQHCSA…DLARDFWNAP (72 aa)) form a domain I, interacts with DnaA modulators region. A domain II region spans residues 72–196 (PIEVQFVLDP…EAADSMYERS (125 aa)). The segment at 83 to 120 (AGQRSPAGATPLAPRAPLPSANPAPVAPGPASAPAVDA) is disordered. The segment covering 96 to 110 (PRAPLPSANPAPVAP) has biased composition (pro residues). The span at 111–120 (GPASAPAVDA) shows a compositional bias: low complexity. Residues 197 to 413 (KLNPVLTFDN…GALRKILAYS (217 aa)) are domain III, AAA+ region. 4 residues coordinate ATP: G241, G243, K244, and T245. The segment at 414 to 533 (KFHGREITIE…LHVLEQTLKG (120 aa)) is domain IV, binds dsDNA.

The protein belongs to the DnaA family. As to quaternary structure, oligomerizes as a right-handed, spiral filament on DNA at oriC.

It is found in the cytoplasm. In terms of biological role, plays an essential role in the initiation and regulation of chromosomal replication. ATP-DnaA binds to the origin of replication (oriC) to initiate formation of the DNA replication initiation complex once per cell cycle. Binds the DnaA box (a 9 base pair repeat at the origin) and separates the double-stranded (ds)DNA. Forms a right-handed helical filament on oriC DNA; dsDNA binds to the exterior of the filament while single-stranded (ss)DNA is stabiized in the filament's interior. The ATP-DnaA-oriC complex binds and stabilizes one strand of the AT-rich DNA unwinding element (DUE), permitting loading of DNA polymerase. After initiation quickly degrades to an ADP-DnaA complex that is not apt for DNA replication. Binds acidic phospholipids. The sequence is that of Chromosomal replication initiator protein DnaA from Burkholderia pseudomallei (strain 1710b).